A 554-amino-acid chain; its full sequence is Formate--tetrahydrofolate ligase (554 aa).

63–70 (TPAGEGKT) contacts ATP.

The protein belongs to the formate--tetrahydrofolate ligase family.

It carries out the reaction (6S)-5,6,7,8-tetrahydrofolate + formate + ATP = (6R)-10-formyltetrahydrofolate + ADP + phosphate. It functions in the pathway one-carbon metabolism; tetrahydrofolate interconversion. The protein is Formate--tetrahydrofolate ligase of Halothermothrix orenii (strain H 168 / OCM 544 / DSM 9562).